The primary structure comprises 103 residues: Histone H4 (103 aa).

Residues 1 to 14 (MSGRGKGGKGLGKG) show a composition bias toward gly residues. Residues 1-20 (MSGRGKGGKGLGKGGAKRHR) are disordered. N-acetylserine is present on Ser-2. 2 positions are modified to N6-acetyl-N6-methyllysine; alternate: Lys-6 and Lys-13. Lys-17 carries the N6-acetyllysine modification. Residues 17 to 21 (KRHRK) mediate DNA binding. Position 21 is an N6-methyllysine (Lys-21).

It belongs to the histone H4 family. As to quaternary structure, the nucleosome is a histone octamer containing two molecules each of H2A, H2B, H3 and H4 assembled in one H3-H4 heterotetramer and two H2A-H2B heterodimers. The octamer wraps approximately 147 bp of DNA.

The protein localises to the nucleus. It localises to the chromosome. In terms of biological role, core component of nucleosome. Nucleosomes wrap and compact DNA into chromatin, limiting DNA accessibility to the cellular machineries which require DNA as a template. Histones thereby play a central role in transcription regulation, DNA repair, DNA replication and chromosomal stability. DNA accessibility is regulated via a complex set of post-translational modifications of histones, also called histone code, and nucleosome remodeling. The protein is Histone H4 of Ascaris suum (Pig roundworm).